The sequence spans 636 residues: tRNA 5-methylaminomethyl-2-thiouridine biosynthesis bifunctional protein MnmC (636 aa).

Residues 1–202 (MTVSKILKQV…ERAALRAQSH (202 aa)) form a tRNA (mnm(5)s(2)U34)-methyltransferase region. The FAD-dependent cmnm(5)s(2)U34 oxidoreductase stretch occupies residues 227–636 (IGGGVASACL…GKALEMSGKS (410 aa)).

The protein in the N-terminal section; belongs to the methyltransferase superfamily. tRNA (mnm(5)s(2)U34)-methyltransferase family. It in the C-terminal section; belongs to the DAO family. Requires FAD as cofactor.

It localises to the cytoplasm. It catalyses the reaction 5-aminomethyl-2-thiouridine(34) in tRNA + S-adenosyl-L-methionine = 5-methylaminomethyl-2-thiouridine(34) in tRNA + S-adenosyl-L-homocysteine + H(+). In terms of biological role, catalyzes the last two steps in the biosynthesis of 5-methylaminomethyl-2-thiouridine (mnm(5)s(2)U) at the wobble position (U34) in tRNA. Catalyzes the FAD-dependent demodification of cmnm(5)s(2)U34 to nm(5)s(2)U34, followed by the transfer of a methyl group from S-adenosyl-L-methionine to nm(5)s(2)U34, to form mnm(5)s(2)U34. The sequence is that of tRNA 5-methylaminomethyl-2-thiouridine biosynthesis bifunctional protein MnmC from Shewanella halifaxensis (strain HAW-EB4).